The primary structure comprises 200 residues: Large ribosomal subunit protein uL4 (200 aa).

The interval 44–71 (AQKTRAEVSGGGKKPWRQKGTGRARAGS) is disordered.

Belongs to the universal ribosomal protein uL4 family. As to quaternary structure, part of the 50S ribosomal subunit.

In terms of biological role, one of the primary rRNA binding proteins, this protein initially binds near the 5'-end of the 23S rRNA. It is important during the early stages of 50S assembly. It makes multiple contacts with different domains of the 23S rRNA in the assembled 50S subunit and ribosome. Its function is as follows. Forms part of the polypeptide exit tunnel. This is Large ribosomal subunit protein uL4 from Psychrobacter sp. (strain PRwf-1).